Reading from the N-terminus, the 136-residue chain is Glutamate-rich protein 4 (136 aa).

Positions Glu-92 to Ile-136 are disordered. The span at Glu-101–Arg-121 shows a compositional bias: basic and acidic residues.

This Mus musculus (Mouse) protein is Glutamate-rich protein 4 (Erich4).